A 258-amino-acid polypeptide reads, in one-letter code: Indole-3-glycerol phosphate synthase 2 (258 aa).

Belongs to the TrpC family.

The enzyme catalyses 1-(2-carboxyphenylamino)-1-deoxy-D-ribulose 5-phosphate + H(+) = (1S,2R)-1-C-(indol-3-yl)glycerol 3-phosphate + CO2 + H2O. The protein operates within amino-acid biosynthesis; L-tryptophan biosynthesis; L-tryptophan from chorismate: step 4/5. The function of the second trp operon in S.coelicolor is to produce tryptophan for the biosynthesis of calcium-dependent antibiotic (CDA). The polypeptide is Indole-3-glycerol phosphate synthase 2 (trpC2) (Streptomyces coelicolor (strain ATCC BAA-471 / A3(2) / M145)).